The primary structure comprises 288 residues: Transmembrane and coiled-coil domain-containing protein 5A (288 aa).

Residues 10 to 192 are a coiled coil; sequence KRNIISLNMD…ALFLEREVSK (183 aa). The helical transmembrane segment at 224–244 threads the bilayer; it reads IFCCLFFITLFFIRLLSYMFF.

It belongs to the TMCO5 family.

The protein resides in the endoplasmic reticulum membrane. The protein localises to the nucleus membrane. The chain is Transmembrane and coiled-coil domain-containing protein 5A (TMCO5A) from Homo sapiens (Human).